The sequence spans 132 residues: MSEFRLARLGEQIREEISALICSGKIKDPRVSSLLSINRVIVSGDLAYAKVYVSSFLDEHKTKQGVRGLENASGFIRTSLAKKLHVRQCPELTFIFDKSIKEGIDMVNKLESLEYFTDPDEDEGTAGSSEAD.

This sequence belongs to the RbfA family. As to quaternary structure, monomer. Binds 30S ribosomal subunits, but not 50S ribosomal subunits or 70S ribosomes.

The protein localises to the cytoplasm. In terms of biological role, one of several proteins that assist in the late maturation steps of the functional core of the 30S ribosomal subunit. Associates with free 30S ribosomal subunits (but not with 30S subunits that are part of 70S ribosomes or polysomes). Required for efficient processing of 16S rRNA. May interact with the 5'-terminal helix region of 16S rRNA. This is Ribosome-binding factor A from Treponema denticola (strain ATCC 35405 / DSM 14222 / CIP 103919 / JCM 8153 / KCTC 15104).